The chain runs to 785 residues: Protein SEY1 (785 aa).

Residues 1-31 (MASAAPINLRAQDTPYVPPTSLPTSSSQTGS) form a disordered region. The Cytoplasmic portion of the chain corresponds to 1–689 (MASAAPINLR…KRSTVASIAQ (689 aa)). A compositionally biased stretch (low complexity) spans 22-31 (LPTSSSQTGS). A GB1/RHD3-type G domain is found at 61–281 (GFSYNIVAVF…SSDYLFKPAY (221 aa)). Position 71-78 (71-78 (GSQSTGKS)) interacts with GTP. Residues 458–482 (SWEEELELLRDEIRAVADQCRKDET) are a coiled coil. A helical membrane pass occupies residues 690–710 (IPYWIYGVLVVLGWNEAMLVL). Topologically, residues 711 to 713 (FNP) are lumenal. The chain crosses the membrane as a helical span at residues 714–734 (LYFAFLLLAMATSYIIAQLGL). Topologically, residues 735–785 (VGPLFQVTRTVGSEIQRQATARLREHFSQPVLAEPVQVGPSRDREEVGQIQ) are cytoplasmic.

The protein belongs to the TRAFAC class dynamin-like GTPase superfamily. GB1/RHD3 GTPase family. RHD3 subfamily.

The protein resides in the endoplasmic reticulum membrane. Cooperates with the reticulon proteins and tubule-shaping DP1 family proteins to generate and maintain the structure of the tubular endoplasmic reticulum network. Has GTPase activity, which is required for its function in ER organization. This Laccaria bicolor (strain S238N-H82 / ATCC MYA-4686) (Bicoloured deceiver) protein is Protein SEY1.